Reading from the N-terminus, the 1342-residue chain is DNA-directed RNA polymerase subunit beta (1342 aa).

The protein belongs to the RNA polymerase beta chain family. In terms of assembly, the RNAP catalytic core consists of 2 alpha, 1 beta, 1 beta' and 1 omega subunit. When a sigma factor is associated with the core the holoenzyme is formed, which can initiate transcription.

It catalyses the reaction RNA(n) + a ribonucleoside 5'-triphosphate = RNA(n+1) + diphosphate. DNA-dependent RNA polymerase catalyzes the transcription of DNA into RNA using the four ribonucleoside triphosphates as substrates. In Aliivibrio fischeri (strain MJ11) (Vibrio fischeri), this protein is DNA-directed RNA polymerase subunit beta.